A 222-amino-acid chain; its full sequence is MKKFLPGLLLMGLVACSSNQRMSDYSQPESQSDLAPKSSTTQFQPQPLLSKASSMPLNLLSSSKNGQVSPSEPSNFMTLMGQNGALLTVWALAKRNWLWAYPNIYSQDFGNIRNWKIEPGKHREYFRFVNQSLGTCIEAYGNGLIHDTCSLDKLAQEFELLPTDSGAVVIKSVSQGRCVTYNPVSPTYYSTVTLSTCDGATEPLRDQTWYLAPPVLEATAVN.

A signal peptide spans Met1–Ala15. The N-palmitoyl cysteine moiety is linked to residue Cys16. A lipid anchor (S-diacylglycerol cysteine) is attached at Cys16. The disordered stretch occupies residues Met22–Gln44. The segment at Trp90–Tyr101 is mediates binding to target cells. A Ricin B-type lectin domain is found at His122 to Leu211.

As to quaternary structure, heterotrimer of 3 subunits, CdtA, CdtB and CdtC. May form higher oligomers.

It localises to the cell outer membrane. Its function is as follows. CDTs are cytotoxins which induce host cell distension, growth arrest in G2/M phase, nucleus swelling, and chromatin fragmentation in HeLa cells. The sequence is that of Cytolethal distending toxin subunit A (cdtA) from Aggregatibacter actinomycetemcomitans (Actinobacillus actinomycetemcomitans).